The following is a 533-amino-acid chain: MNVQFPWLTVLTLLPLVAAFFIPVLPDREGKTVRWYALAIALLEFGLSAMVFWRHYDAQSAQFQMVETVPWLPQIGLNWSLAVDGLAVPLILLTGLVNTLAIFAAWQVKQKPRLFYFLMLALYSAQIGVFAAQDLILFFLIWELELVPVYLLISIWGGAQRQYAATKFILYTAVGSLFILIAGLGMAFYGGDFSLNMAALGLKNYPLALELLAYAGFLIAFGVKLPIFPLHTWLPDAHGEASAPVSMVLAGVLLKMGGYGLIRFNLQMLPDAHIYFAPVLIALGVVNIIYGALTAFGQENLKRRLAYSSISHMGFVLLGIGALNGIGLNGAMLQMLSHGLIAAVLFFLAGVTYDRTHTLAMEKMSGIAQSMPKTFALFTASSMASLALPGMSGFVSELTVFLGLTNSDAYSTTFKVGVIFLAAVGVIITPVYLLSMVRRVFTGKQAGDMFDKLLLDINPRETFIALSLLVPIIAVGMYPKVATQTYDVTTTAIARHVHGALPAVAQHHLPLYAQLTQSAPRLFRETTVADNSL.

14 helical membrane-spanning segments follow: residues 5-25 (FPWLTVLTLLPLVAAFFIPVL), 33-53 (VRWYALAIALLEFGLSAMVFW), 86-106 (LAVPLILLTGLVNTLAIFAAW), 114-134 (LFYFLMLALYSAQIGVFAAQD), 135-155 (LILFFLIWELELVPVYLLISI), 168-188 (FILYTAVGSLFILIAGLGMAF), 208-228 (ALELLAYAGFLIAFGVKLPIF), 242-262 (SAPVSMVLAGVLLKMGGYGLI), 276-296 (FAPVLIALGVVNIIYGALTAF), 310-330 (ISHMGFVLLGIGALNGIGLNG), 331-351 (AMLQMLSHGLIAAVLFFLAGV), 384-404 (ASLALPGMSGFVSELTVFLGL), 416-436 (VGVIFLAAVGVIITPVYLLSM), and 462-482 (TFIALSLLVPIIAVGMYPKVA).

Belongs to the complex I subunit 4 family.

The protein localises to the cellular thylakoid membrane. The catalysed reaction is a plastoquinone + NADH + (n+1) H(+)(in) = a plastoquinol + NAD(+) + n H(+)(out). It carries out the reaction a plastoquinone + NADPH + (n+1) H(+)(in) = a plastoquinol + NADP(+) + n H(+)(out). Functionally, NDH-1 shuttles electrons from NAD(P)H, via FMN and iron-sulfur (Fe-S) centers, to quinones in the respiratory chain. The immediate electron acceptor for the enzyme in this species is believed to be plastoquinone. Couples the redox reaction to proton translocation (for every two electrons transferred, four hydrogen ions are translocated across the cytoplasmic membrane), and thus conserves the redox energy in a proton gradient. The protein is NAD(P)H-quinone oxidoreductase chain 4 2 of Thermosynechococcus vestitus (strain NIES-2133 / IAM M-273 / BP-1).